The primary structure comprises 484 residues: Serine/arginine-rich splicing factor 11 (484 aa).

The tract at residues 1-33 is disordered; sequence MSNTTVVPSTAGPGPSGGPGGGGGGGGGGGGTE. S2 is modified (N-acetylserine). A compositionally biased stretch (gly residues) spans 14 to 32; it reads GPSGGPGGGGGGGGGGGGT. Residues 33–113 enclose the RRM domain; sequence EVIQVTNVSP…ALIVVPYAEG (81 aa). K197 participates in a covalent cross-link: Glycyl lysine isopeptide (Lys-Gly) (interchain with G-Cter in SUMO2). At S207 the chain carries Phosphoserine. K211 participates in a covalent cross-link: Glycyl lysine isopeptide (Lys-Gly) (interchain with G-Cter in SUMO2). S212 carries the phosphoserine modification. The disordered stretch occupies residues 233-484; it reads ISAAIEPDKK…HHEEDMDMSD (252 aa). Residues 244–308 show a composition bias toward basic residues; sequence EKRRHSRSRS…ERGRRSRSTS (65 aa). 10 consecutive repeat copies span residues 247-255, 258-265, 267-274, 275-282, 285-292, 293-300, 302-309, 321-328, 334-341, and 346-353. A 10 X 8 AA approximate repeats of R-R-S-R-S-R-S-R region spans residues 247 to 353; sequence RHSRSRSRSR…RRRRSRSGTR (107 aa). Residues 309–320 show a composition bias toward basic and acidic residues; that stretch reads KTRDKKKEDKEK. S323 carries the phosphoserine modification. Position 325 is a phosphothreonine (T325). The span at 334-379 shows a compositional bias: basic residues; it reads RRSRSASRERRRRRSRSGTRSPKKPRSPKRKLSRSPSPRRHKKEKK. 3 stretches are compositionally biased toward basic and acidic residues: residues 380 to 395, 402 to 424, and 433 to 478; these read KDKD…ERST, KDKE…VTRD, and DSEK…HHEE. Residues S414 and S434 each carry the phosphoserine modification. A Phosphothreonine modification is found at T447. A phosphoserine mark is found at S449, S456, S464, and S483.

It belongs to the splicing factor SR family. In terms of assembly, interacts with PUF60.

It is found in the nucleus. Functionally, may function in pre-mRNA splicing. This chain is Serine/arginine-rich splicing factor 11 (SRSF11), found in Homo sapiens (Human).